Reading from the N-terminus, the 99-residue chain is MNKRKQKQISRILAAKRAEKCGQINAELQETGEYLEGRVHLLRAKLSINGINLKAYVLEQVINIKHQIVTERFGNVLLGLASGMIGGIIGMFMWVLCIL.

Residues 76–96 traverse the membrane as a helical segment; it reads VLLGLASGMIGGIIGMFMWVL.

The protein localises to the host membrane. This is an uncharacterized protein from Haemophilus phage HP1 (strain HP1c1) (Bacteriophage HP1).